A 177-amino-acid polypeptide reads, in one-letter code: TRAF-interacting protein with FHA domain-containing protein A (177 aa).

The FHA domain occupies 48–104 (VAFGRDYNVCRYPLLSNRVSRIQFNLQFFKHFNCSTTAIEIKNLSKKNKLYVDNLEL).

It belongs to the TIFA family. In terms of assembly, interacts with traf6.

The protein resides in the cytoplasm. Its function is as follows. Adapter molecule that plays a key role in the activation of pro-inflammatory NF-kappa-B signaling following detection of bacterial pathogen-associated molecular pattern metabolites (PAMPs). Promotes activation of an innate immune response by inducing the oligomerization and polyubiquitination of TRAF6, which leads to the activation of TAK1 and IKK through a proteasome-independent mechanism. This Xenopus tropicalis (Western clawed frog) protein is TRAF-interacting protein with FHA domain-containing protein A.